The primary structure comprises 209 residues: Max dimerization protein 4 (209 aa).

The interval 6 to 23 is interaction with SIN3A and SIN3B; it reads LLLLLEAAEYLERRDREA. The region spanning 53-105 is the bHLH domain; the sequence is NNRSSHNELEKHRRAKLRLYLEQLKQLGPLGPDSTRHTTLSLLKRAKMHIKKL. Positions 137–209 are disordered; that stretch reads SVERVRTDST…CRRPGCPGLS (73 aa). A compositionally biased stretch (acidic residues) spans 153 to 163; it reads DDSEQEVDIEG. A compositionally biased stretch (polar residues) spans 185–195; sequence SLQSSGCSDSS.

Efficient DNA binding requires dimerization with another bHLH protein. Binds DNA as a heterodimer with MAX. Interacts with SIN3A AND SIN3B. Interacts with RNF17.

It localises to the nucleus. Its function is as follows. Transcriptional repressor. Binds with MAX to form a sequence-specific DNA-binding protein complex which recognizes the core sequence 5'-CAC[GA]TG-3'. Antagonizes MYC transcriptional activity by competing for MAX and suppresses MYC dependent cell transformation. The sequence is that of Max dimerization protein 4 (Mxd4) from Mus musculus (Mouse).